The primary structure comprises 144 residues: Ribosome maturation factor RimP (144 aa).

Belongs to the RimP family.

It is found in the cytoplasm. Its function is as follows. Required for maturation of 30S ribosomal subunits. This chain is Ribosome maturation factor RimP, found in Methylobacillus flagellatus (strain ATCC 51484 / DSM 6875 / VKM B-1610 / KT).